The chain runs to 292 residues: RWD domain-containing protein 2A (292 aa).

The region spanning 14–134 is the RWD domain; that stretch reads LEMEMLFSMF…QWLQDNSASY (121 aa).

The sequence is that of RWD domain-containing protein 2A (RWDD2A) from Macaca fascicularis (Crab-eating macaque).